The chain runs to 132 residues: Small ribosomal subunit protein uS8 (132 aa).

Belongs to the universal ribosomal protein uS8 family. As to quaternary structure, part of the 30S ribosomal subunit. Contacts proteins S5 and S12.

One of the primary rRNA binding proteins, it binds directly to 16S rRNA central domain where it helps coordinate assembly of the platform of the 30S subunit. The protein is Small ribosomal subunit protein uS8 of Heliobacterium modesticaldum (strain ATCC 51547 / Ice1).